A 59-amino-acid chain; its full sequence is Membrane-associated ATPase epsilon chain (59 aa).

The protein to E.hirae NtpH. As to quaternary structure, sul-ATPase is composed of six (or maybe five) subunits: alpha, beta, delta, gamma, C (proteolipid), and possibly epsilon.

It carries out the reaction ATP + H2O + 4 H(+)(in) = ADP + phosphate + 5 H(+)(out). The protein is Membrane-associated ATPase epsilon chain (atpE) of Sulfurisphaera tokodaii (strain DSM 16993 / JCM 10545 / NBRC 100140 / 7) (Sulfolobus tokodaii).